The sequence spans 251 residues: GTP cyclohydrolase 1 type 2 homolog (251 aa).

Residues H63, H64, D101, H219, and E223 each coordinate a divalent metal cation.

Belongs to the GTP cyclohydrolase I type 2/NIF3 family. In terms of assembly, toroid-shaped homohexamer. In the hexamer, 3 dimers assemble to form a ring-like structure surrounding a central hole.

The sequence is that of GTP cyclohydrolase 1 type 2 homolog from Haemophilus influenzae (strain ATCC 51907 / DSM 11121 / KW20 / Rd).